The following is a 270-amino-acid chain: uncharacterized protein (270 aa).

An N-terminal signal peptide occupies residues 1–23; the sequence is MFNFITFILFAVVCISYCHKSRG. 2 N-linked (GlcNAc...) asparagine glycosylation sites follow: Asn-246 and Asn-252.

The protein localises to the secreted. This is an uncharacterized protein from Caenorhabditis elegans.